The chain runs to 429 residues: GTPase Obg (429 aa).

The region spanning 1–158 (MFVDQVKIYV…RNVQLELKVL (158 aa)) is the Obg domain. The disordered stretch occupies residues 124-145 (RGNKRFATPANPAPELSENGEP). The region spanning 159–329 (ADVGLVGFPS…LLLAIADKLE (171 aa)) is the OBG-type G domain. GTP contacts are provided by residues 165–172 (GFPSVGKS), 190–194 (FTTIV), 212–215 (DLPG), 282–285 (NKMD), and 310–312 (SAV). Mg(2+)-binding residues include Ser-172 and Thr-192. The 79-residue stretch at 351-429 (KYVADEPDFE…LLDYEFEFMD (79 aa)) folds into the OCT domain.

This sequence belongs to the TRAFAC class OBG-HflX-like GTPase superfamily. OBG GTPase family. As to quaternary structure, monomer. Mg(2+) is required as a cofactor.

The protein localises to the cytoplasm. Its function is as follows. An essential GTPase which binds GTP, GDP and possibly (p)ppGpp with moderate affinity, with high nucleotide exchange rates and a fairly low GTP hydrolysis rate. Plays a role in control of the cell cycle, stress response, ribosome biogenesis and in those bacteria that undergo differentiation, in morphogenesis control. This Listeria monocytogenes serotype 4a (strain HCC23) protein is GTPase Obg.